The chain runs to 203 residues: Transcriptional regulator GfcR 2 (203 aa).

This sequence belongs to the purine/pyrimidine phosphoribosyltransferase family. GfcR subfamily.

This chain is Transcriptional regulator GfcR 2, found in Methanosarcina acetivorans (strain ATCC 35395 / DSM 2834 / JCM 12185 / C2A).